The sequence spans 488 residues: Glycogen synthase (488 aa).

An ADP-alpha-D-glucose-binding site is contributed by Lys-16.

It belongs to the glycosyltransferase 1 family. Bacterial/plant glycogen synthase subfamily.

It carries out the reaction [(1-&gt;4)-alpha-D-glucosyl](n) + ADP-alpha-D-glucose = [(1-&gt;4)-alpha-D-glucosyl](n+1) + ADP + H(+). It participates in glycan biosynthesis; glycogen biosynthesis. Its function is as follows. Synthesizes alpha-1,4-glucan chains using ADP-glucose. The polypeptide is Glycogen synthase (Marinobacter nauticus (strain ATCC 700491 / DSM 11845 / VT8) (Marinobacter aquaeolei)).